A 219-amino-acid chain; its full sequence is Uracil-DNA glycosylase (219 aa).

The Proton acceptor role is filled by D61.

It belongs to the uracil-DNA glycosylase (UDG) superfamily. UNG family.

Its subcellular location is the cytoplasm. The catalysed reaction is Hydrolyzes single-stranded DNA or mismatched double-stranded DNA and polynucleotides, releasing free uracil.. Its function is as follows. Excises uracil residues from the DNA which can arise as a result of misincorporation of dUMP residues by DNA polymerase or due to deamination of cytosine. The polypeptide is Uracil-DNA glycosylase (Haemophilus influenzae (strain PittEE)).